The sequence spans 413 residues: Phosphopentomutase (413 aa).

Residues Asp-11, Asp-306, His-311, Asp-347, His-348, and His-359 each contribute to the Mn(2+) site.

The protein belongs to the phosphopentomutase family. Mn(2+) is required as a cofactor.

It is found in the cytoplasm. The enzyme catalyses 2-deoxy-alpha-D-ribose 1-phosphate = 2-deoxy-D-ribose 5-phosphate. It catalyses the reaction alpha-D-ribose 1-phosphate = D-ribose 5-phosphate. The protein operates within carbohydrate degradation; 2-deoxy-D-ribose 1-phosphate degradation; D-glyceraldehyde 3-phosphate and acetaldehyde from 2-deoxy-alpha-D-ribose 1-phosphate: step 1/2. Isomerase that catalyzes the conversion of deoxy-ribose 1-phosphate (dRib-1-P) and ribose 1-phosphate (Rib-1-P) to deoxy-ribose 5-phosphate (dRib-5-P) and ribose 5-phosphate (Rib-5-P), respectively. This chain is Phosphopentomutase, found in Helicobacter pylori (strain P12).